The primary structure comprises 823 residues: Putative ankyrin repeat domain-containing protein 20A2 (823 aa).

ANK repeat units lie at residues 66–95 (QHRT…QIDV), 99–128 (ENRT…NPNL), 132–161 (YGNT…HIEA), 165–194 (DNNT…SSHA), and 198–227 (LRRS…DVFA). Disordered stretches follow at residues 301–343 (VPEK…EVED) and 355–402 (VQTL…LSEN). Residues 372-384 (QERHERSEKKQPQ) show a composition bias toward basic and acidic residues. 3 coiled-coil regions span residues 431-480 (KKLK…KQLE), 565-724 (EMIT…NNST), and 776-805 (LVLE…EKTE).

The chain is Putative ankyrin repeat domain-containing protein 20A2 from Homo sapiens (Human).